The sequence spans 251 residues: Probable transcriptional regulatory protein BLD_0450 (251 aa).

This sequence belongs to the TACO1 family.

Its subcellular location is the cytoplasm. This Bifidobacterium longum (strain DJO10A) protein is Probable transcriptional regulatory protein BLD_0450.